We begin with the raw amino-acid sequence, 81 residues long: Apolipoprotein C-I, acidic form (81 aa).

An N-terminal signal peptide occupies residues 1–24 (MRLFLSLLVVVLSIVLEGPTPAQG).

Belongs to the apolipoprotein C1 family.

It localises to the secreted. The chain is Apolipoprotein C-I, acidic form (APOC1A) from Theropithecus gelada (Gelada baboon).